The sequence spans 249 residues: MTKKDIVSIVSKERAEEIYGLLTQSNLHSSDIEVIKKNEDYCLKILNEALTHTSFNLSINHERLEFQGDAVLRLAASEYIQSHFPKLSVGDRSALRAQLVSDRWLAKVGYKIGIKTTMLIANKALKDEAATDTICAEGTEALIGALYECLRNIDAIQNWLEPYWNIESEEVLADPHKQNEKSALQEWSQGQGLNKPIYTIKEISKQHGDLKRFYCTVHIQNDFRGEGWGSSRKKAQKEAAKEALKKLTN.

In terms of domain architecture, RNase III spans 29–151; the sequence is SSDIEVIKKN…LIGALYECLR (123 aa). Position 65 (E65) interacts with Mg(2+). The active site involves D69. Mg(2+) is bound by residues E137 and E140. Residue E140 is part of the active site. Residues 179–249 enclose the DRBM domain; sequence NEKSALQEWS…AKEALKKLTN (71 aa). The disordered stretch occupies residues 227–249; sequence GWGSSRKKAQKEAAKEALKKLTN. The segment covering 236–249 has biased composition (basic and acidic residues); sequence QKEAAKEALKKLTN.

This sequence belongs to the ribonuclease III family. In terms of assembly, homodimer. Mg(2+) serves as cofactor.

It is found in the cytoplasm. It carries out the reaction Endonucleolytic cleavage to 5'-phosphomonoester.. Its function is as follows. Digests double-stranded RNA. Involved in the processing of primary rRNA transcript to yield the immediate precursors to the large and small rRNAs (23S and 16S). Processes some mRNAs, and tRNAs when they are encoded in the rRNA operon. Processes pre-crRNA and tracrRNA of type II CRISPR loci if present in the organism. This chain is Ribonuclease 3, found in Prochlorococcus marinus (strain SARG / CCMP1375 / SS120).